The primary structure comprises 160 residues: MTNLTLDVNIIDFPSIPVAMLPHRCRPELLNYSVAKFIMWRKETGLSPVNQSQTFGVAWDDPATTAPEAFRFDICGSVSEPIPDNRYGVSNGELTGGRYAVARHVGELDDISHTIWGIIRHWLPASGEKMRKAPILFHYTNLAEGVTEQRLETNVYVPLA.

Its function is as follows. Represses expression of mcbR. The sequence is that of Probable transcriptional regulator YgiV (ygiV) from Escherichia coli O157:H7.